Consider the following 404-residue polypeptide: Serine/threonine transporter SstT (404 aa).

8 helical membrane passes run 17 to 37, 39 to 59, 75 to 95, 138 to 158, 179 to 199, 212 to 232, 287 to 307, and 313 to 333; these read IGIG…LTGF, ILGK…VFAL, MTLI…VAVL, ALAT…GLAL, IVVW…FTTI, FLIL…NPLI, IPLG…VLTL, and FGIP…AVSA.

Belongs to the dicarboxylate/amino acid:cation symporter (DAACS) (TC 2.A.23) family.

The protein localises to the cell membrane. The catalysed reaction is L-serine(in) + Na(+)(in) = L-serine(out) + Na(+)(out). It catalyses the reaction L-threonine(in) + Na(+)(in) = L-threonine(out) + Na(+)(out). Its function is as follows. Involved in the import of serine and threonine into the cell, with the concomitant import of sodium (symport system). The chain is Serine/threonine transporter SstT from Streptococcus pyogenes serotype M12 (strain MGAS2096).